The sequence spans 1068 residues: Carbamoyl phosphate synthase large chain (1068 aa).

A carboxyphosphate synthetic domain region spans residues 1-401 (MPRRTDLHRI…SLLKAVRSLE (401 aa)). Residues R129, R169, G175, G176, Q208, I210, E215, G241, V242, H243, Q284, and E298 each coordinate ATP. An ATP-grasp 1 domain is found at 133 to 327 (KQLMDELGQP…IAKIAAKIAV (195 aa)). Residues Q284, E298, and N300 each contribute to the Mg(2+) site. Mn(2+) contacts are provided by Q284, E298, and N300. The tract at residues 402–546 (IGVDHLALRE…YSTYEMENES (145 aa)) is oligomerization domain. The carbamoyl phosphate synthetic domain stretch occupies residues 547–935 (KKSQRPSVLV…ALYKVFEAAN (389 aa)). The 197-residue stretch at 671–867 (ESLLAELGIP…MAEVATRIIL (197 aa)) folds into the ATP-grasp 2 domain. ATP contacts are provided by R707, R746, L748, E752, G777, V778, H779, S780, Q820, and E838. Mg(2+)-binding residues include Q820, E838, and N840. Q820, E838, and N840 together coordinate Mn(2+). Residues 936–1068 (LHVPEYGKIL…ESRVFSTESI (133 aa)) enclose the MGS-like domain. The segment at 936–1068 (LHVPEYGKIL…ESRVFSTESI (133 aa)) is allosteric domain.

It belongs to the CarB family. In terms of assembly, composed of two chains; the small (or glutamine) chain promotes the hydrolysis of glutamine to ammonia, which is used by the large (or ammonia) chain to synthesize carbamoyl phosphate. Tetramer of heterodimers (alpha,beta)4. The cofactor is Mg(2+). Mn(2+) serves as cofactor.

It carries out the reaction hydrogencarbonate + L-glutamine + 2 ATP + H2O = carbamoyl phosphate + L-glutamate + 2 ADP + phosphate + 2 H(+). The catalysed reaction is hydrogencarbonate + NH4(+) + 2 ATP = carbamoyl phosphate + 2 ADP + phosphate + 2 H(+). Its pathway is amino-acid biosynthesis; L-arginine biosynthesis; carbamoyl phosphate from bicarbonate: step 1/1. It functions in the pathway pyrimidine metabolism; UMP biosynthesis via de novo pathway; (S)-dihydroorotate from bicarbonate: step 1/3. Its function is as follows. Large subunit of the glutamine-dependent carbamoyl phosphate synthetase (CPSase). CPSase catalyzes the formation of carbamoyl phosphate from the ammonia moiety of glutamine, carbonate, and phosphate donated by ATP, constituting the first step of 2 biosynthetic pathways, one leading to arginine and/or urea and the other to pyrimidine nucleotides. The large subunit (synthetase) binds the substrates ammonia (free or transferred from glutamine from the small subunit), hydrogencarbonate and ATP and carries out an ATP-coupled ligase reaction, activating hydrogencarbonate by forming carboxy phosphate which reacts with ammonia to form carbamoyl phosphate. The polypeptide is Carbamoyl phosphate synthase large chain (Cutibacterium acnes (strain DSM 16379 / KPA171202) (Propionibacterium acnes)).